A 148-amino-acid polypeptide reads, in one-letter code: UPF0260 protein YE2365 (148 aa).

Belongs to the UPF0260 family.

The polypeptide is UPF0260 protein YE2365 (Yersinia enterocolitica serotype O:8 / biotype 1B (strain NCTC 13174 / 8081)).